Reading from the N-terminus, the 154-residue chain is MSIELDLQLAVENEHGLPSEAEFALWLTRTITPFQAQAEVTVRIVDEAESHALNLNYRGKDKPTNVLSFPFEAPSGMEMDLLGDLVICRQVVEREAIEQNKPLQAHWAHMVVHGSLHLLGYDHIEDDEAEEMESLETEIMQEMGFTDPYLAEKE.

Residues H113, H117, and H123 each coordinate Zn(2+).

It belongs to the endoribonuclease YbeY family. The cofactor is Zn(2+).

The protein localises to the cytoplasm. Functionally, single strand-specific metallo-endoribonuclease involved in late-stage 70S ribosome quality control and in maturation of the 3' terminus of the 16S rRNA. This is Endoribonuclease YbeY from Vibrio cholerae serotype O1 (strain ATCC 39315 / El Tor Inaba N16961).